Reading from the N-terminus, the 130-residue chain is Ribosome-binding factor A (130 aa).

Belongs to the RbfA family. As to quaternary structure, monomer. Binds 30S ribosomal subunits, but not 50S ribosomal subunits or 70S ribosomes.

The protein localises to the cytoplasm. In terms of biological role, one of several proteins that assist in the late maturation steps of the functional core of the 30S ribosomal subunit. Associates with free 30S ribosomal subunits (but not with 30S subunits that are part of 70S ribosomes or polysomes). Required for efficient processing of 16S rRNA. May interact with the 5'-terminal helix region of 16S rRNA. This chain is Ribosome-binding factor A, found in Alkalilimnicola ehrlichii (strain ATCC BAA-1101 / DSM 17681 / MLHE-1).